We begin with the raw amino-acid sequence, 363 residues long: MGTAKPPGRGCGALPRWLLGAALLLGLRLCMELRHAGSGPPGRRDLRGPPRTHLLPAPGPLRGTRRRQVTYVRSGRRALPRGGVSTTPPEPSCCAQLGLPSRKGPRWHIELQPWAGPSRSLDEEASRFLNYIGTTQIACDRMGTNSVATDSGPALKPWLVCLDDRFGLAHQIRTKQCRLYSLGLGSDDTHFEVSMANGGCEVHRFDPSVRSAHVLQSQRLWHHRLSIDWRDPHPAVAAQKPYSNTRKLGSILNEFGHHKIDVLKADLESAEWKVLENLILEDVLEQIGQLIFEIHLHWPGFEVSGSESSVVRFWYSLLKELERKDFRLFHTYKDLSKPQLFLKKDIFNASSCYTLSWVNTRWR.

The first 38 residues, 1-38 (MGTAKPPGRGCGALPRWLLGAALLLGLRLCMELRHAGS), serve as a signal peptide directing secretion. The interval 37-62 (GSGPPGRRDLRGPPRTHLLPAPGPLR) is disordered.

The protein belongs to the methyltransferase superfamily.

The protein localises to the secreted. In terms of biological role, probable methyltransferase. In Rattus norvegicus (Rat), this protein is Probable methyltransferase-like protein 24 (Mettl24).